The chain runs to 165 residues: Phosphopantetheine adenylyltransferase (165 aa).

Residue S10 coordinates substrate. Residues 10 to 11 (SF) and H18 contribute to the ATP site. The substrate site is built by K42, L74, and R88. ATP is bound by residues 89–91 (GLR), E99, and 124–130 (YSFISSS).

The protein belongs to the bacterial CoaD family. As to quaternary structure, homohexamer. Mg(2+) serves as cofactor.

The protein localises to the cytoplasm. It carries out the reaction (R)-4'-phosphopantetheine + ATP + H(+) = 3'-dephospho-CoA + diphosphate. Its pathway is cofactor biosynthesis; coenzyme A biosynthesis; CoA from (R)-pantothenate: step 4/5. In terms of biological role, reversibly transfers an adenylyl group from ATP to 4'-phosphopantetheine, yielding dephospho-CoA (dPCoA) and pyrophosphate. This Macrococcus caseolyticus (strain JCSC5402) (Macrococcoides caseolyticum) protein is Phosphopantetheine adenylyltransferase.